The primary structure comprises 109 residues: Small ribosomal subunit protein uS17A (109 aa).

The protein belongs to the universal ribosomal protein uS17 family. Part of the 30S ribosomal subunit.

Functionally, one of the primary rRNA binding proteins, it binds specifically to the 5'-end of 16S ribosomal RNA. The chain is Small ribosomal subunit protein uS17A from Methanosarcina acetivorans (strain ATCC 35395 / DSM 2834 / JCM 12185 / C2A).